Consider the following 765-residue polypeptide: MERDQHQEICNDGGLLCESKEVSVNNHNSDAVEESEDTITSGNQEVSPANGPTLPILQKIIDCSDKIKILKDEHALVSNQVQEIKNCSLVEPEISRALQLLTTKLGALEKQYLEESSERKRLYNEVIELKGNIRVFCRCRPLNQAEIANGCASVAEFDTTQENELQILSSDSSKKHFKFDHVFKPDDGQETVFAQTKPIVTSVLDGYNVCIFAYGQTGTGKTFTMEGTPENRGVNYRTLEELFRCSESKSHLMKFELSVSMLEVYNEKIRDLLVDNSNQPPKKLEVKQSAEGTQEVPGLVEAQVYNTDGVWDLLKKGYAVRSVGSTAANEQSSRSHCLLRVTVKGENLINGQRTRSHLWLVDLAGSERVGKVEVEGERLKESQFINKSLSALGDVISALASKTSHIPYRNSKLTHMLQNSLGGDCKTLMFVQISPSSADLGETLCSLNFASRVRGIESGPARKQADVSELLKSKQMAEKLKHEEKETKKLQDNVQSLQLRLTAREHICRGLQDKVRDLEFQLAEERKTRIKQESRALATASSTTTTTSRHLRETLPTIIEKKPPLAPTRMRMPLRRITNFMPQQQPSQGHSKRFSDTTFKENNNSNRRSSSMDVNTLMKPRRSSIAFRPAPAPSAIASSNKTIMPRRRVSIATLRPEPSSLSSMETPSRPPPSFRGDPRKARYSKLFSPDRNLVTPNAMKSSRFMKSPLGGGGSSWKPSHPTVIALQKKAVVWSPLKFKNRRPSLVAIRSSASSSSASDLLRREQ.

Residues 132 to 456 form the Kinesin motor domain; the sequence is NIRVFCRCRP…LNFASRVRGI (325 aa). An ATP-binding site is contributed by 215–222; sequence GQTGTGKT. The stretch at 469 to 534 forms a coiled coil; sequence ELLKSKQMAE…ERKTRIKQES (66 aa). Disordered regions lie at residues 581 to 613 and 654 to 678; these read MPQQ…SSMD and LRPE…RGDP. Over residues 602–611 the composition is skewed to low complexity; the sequence is NNNSNRRSSS.

The protein belongs to the TRAFAC class myosin-kinesin ATPase superfamily. Kinesin family. KIN-14 subfamily.

This Arabidopsis thaliana (Mouse-ear cress) protein is Kinesin-like protein KIN-14S.